Consider the following 434-residue polypeptide: Nicotinate phosphoribosyltransferase (434 aa).

Residue His-242 is modified to Phosphohistidine; by autocatalysis.

This sequence belongs to the NAPRTase family. Post-translationally, transiently phosphorylated on a His residue during the reaction cycle. Phosphorylation strongly increases the affinity for substrates and increases the rate of nicotinate D-ribonucleotide production. Dephosphorylation regenerates the low-affinity form of the enzyme, leading to product release.

The catalysed reaction is nicotinate + 5-phospho-alpha-D-ribose 1-diphosphate + ATP + H2O = nicotinate beta-D-ribonucleotide + ADP + phosphate + diphosphate. It functions in the pathway cofactor biosynthesis; NAD(+) biosynthesis; nicotinate D-ribonucleotide from nicotinate: step 1/1. Its function is as follows. Catalyzes the synthesis of beta-nicotinate D-ribonucleotide from nicotinate and 5-phospho-D-ribose 1-phosphate at the expense of ATP. The protein is Nicotinate phosphoribosyltransferase of Rhizobium etli (strain CIAT 652).